Reading from the N-terminus, the 137-residue chain is Small ribosomal subunit protein uS12 (137 aa).

The interval 1-28 is disordered; it reads MPTINQLVRKPRKSKAKKSDSPALNKGF. Position 102 is a 3-methylthioaspartic acid (Asp102).

The protein belongs to the universal ribosomal protein uS12 family. In terms of assembly, part of the 30S ribosomal subunit. Contacts proteins S8 and S17. May interact with IF1 in the 30S initiation complex.

Its function is as follows. With S4 and S5 plays an important role in translational accuracy. In terms of biological role, interacts with and stabilizes bases of the 16S rRNA that are involved in tRNA selection in the A site and with the mRNA backbone. Located at the interface of the 30S and 50S subunits, it traverses the body of the 30S subunit contacting proteins on the other side and probably holding the rRNA structure together. The combined cluster of proteins S8, S12 and S17 appears to hold together the shoulder and platform of the 30S subunit. The protein is Small ribosomal subunit protein uS12 of Staphylococcus carnosus (strain TM300).